A 249-amino-acid polypeptide reads, in one-letter code: Cell division protein FtsQ (249 aa).

Topologically, residues 1 to 6 are cytoplasmic; the sequence is MKFILF. The helical transmembrane segment at 7–23 threads the bilayer; that stretch reads ALLVSAGSWYGWKQLHS. The Periplasmic segment spans residues 24 to 249; sequence QDAVSKPIRY…YKNVMKERRI (226 aa). The POTRA domain occupies 29-98; sequence KPIRYVKIEG…DAVHIKITEQ (70 aa).

This sequence belongs to the FtsQ/DivIB family. FtsQ subfamily. Part of a complex composed of FtsB, FtsL and FtsQ.

It localises to the cell inner membrane. Essential cell division protein. May link together the upstream cell division proteins, which are predominantly cytoplasmic, with the downstream cell division proteins, which are predominantly periplasmic. May control correct divisome assembly. The protein is Cell division protein FtsQ of Methylomonas methanica (strain DSM 25384 / MC09).